The primary structure comprises 112 residues: Secretoglobin family 2B member 24 (112 aa).

An N-terminal signal peptide occupies residues methionine 1 to alanine 23.

This sequence belongs to the secretoglobin family. Expressed in lacrimal gland, at higher level in males than females.

Its subcellular location is the secreted. The protein is Secretoglobin family 2B member 24 (Scgb2b24) of Mus musculus (Mouse).